Consider the following 820-residue polypeptide: Nuclear pore complex protein Nup93 (820 aa).

This sequence belongs to the nucleoporin interacting component (NIC) family.

It localises to the nucleus membrane. The protein localises to the nucleus. The protein resides in the nuclear pore complex. Functionally, plays a role in the nuclear pore complex (NPC) assembly and/or maintenance. The protein is Nuclear pore complex protein Nup93 (dye) of Danio rerio (Zebrafish).